We begin with the raw amino-acid sequence, 634 residues long: Pescadillo homolog (634 aa).

Positions 321–414 constitute a BRCT domain; it reads RLRTLFKGLK…QLLPTNKYFM (94 aa). Disordered stretches follow at residues 437-473, 491-561, and 603-634; these read EEKA…EEIE, EYKK…RKAE, and NIDA…LKMA. Ser-453 is subject to Phosphoserine. Composition is skewed to acidic residues over residues 454 to 473 and 501 to 527; these read DDDD…EEIE and VNED…DVEQ. 2 coiled-coil regions span residues 460-546 and 596-629; these read SDAE…KVES and LLRK…AAAK. 2 stretches are compositionally biased toward basic and acidic residues: residues 528-548 and 603-623; these read LDDK…ESGK and NIDA…KKAA. The segment covering 624–634 has biased composition (low complexity); the sequence is AEAAAKALKMA.

The protein belongs to the pescadillo family.

It is found in the nucleus. It localises to the nucleolus. The protein resides in the nucleoplasm. Its function is as follows. Required for maturation of ribosomal RNAs and formation of the large ribosomal subunit. In Drosophila willistoni (Fruit fly), this protein is Pescadillo homolog.